Consider the following 158-residue polypeptide: Encapsulin nanocompartment cargo protein EncB (158 aa).

The Fe cation site is built by Glu-22, Glu-52, and His-55. Short sequence motifs (di-iron-binding motif) lie at residues 52–55 and 58–61; these read EKEH and EAVH. Residues 92-158 form a disordered region; it reads ATVHVPTPDG…RGGGGSGSGR (67 aa). The tract at residues 142-149 is probable targeting peptide; it reads LTVGSLRR. A compositionally biased stretch (gly residues) spans 148–158; the sequence is RRGGGGSGSGR.

The protein belongs to the ferritin-like superfamily.

It is found in the encapsulin nanocompartment. Cargo protein of a type 1 encapsulin nanocompartment. May help nucleate Fe atoms in the interior of the encapsulin nanocompartment. Present in about 36 copies/encapsulin nanocompartment. The protein is Encapsulin nanocompartment cargo protein EncB of Myxococcus xanthus (strain DK1622).